Consider the following 383-residue polypeptide: Probable assembly chaperone of rpl4 (383 aa).

The span at 1-12 (MGKPRPHKKKAS) shows a compositional bias: basic residues. The tract at residues 1–33 (MGKPRPHKKKASKTREKSVLSAGGSISKRKMNE) is disordered. TPR repeat units follow at residues 35–68 (PRKL…ATSN), 73–106 (LSSL…DPTG), 116–147 (AEKF…LRGI), and 193–226 (PEVL…WKDL). A disordered region spans residues 345–383 (NKELGEEMEDDSNVEDGEGEGEEEWEGIESDSDHEMADS). The segment covering 350–374 (EEMEDDSNVEDGEGEGEEEWEGIES) has biased composition (acidic residues).

The protein belongs to the ACL4 family.

Its subcellular location is the cytoplasm. It is found in the nucleus. Acts as a chaperone for the L4 ribosomal subunit, required for hierarchical ribosome assembly. Shields ribosomal protein L4 until timely release and insertion into the pre-ribosome is possible, once ribosomal protein L18 is present. The sequence is that of Probable assembly chaperone of rpl4 from Emericella nidulans (strain FGSC A4 / ATCC 38163 / CBS 112.46 / NRRL 194 / M139) (Aspergillus nidulans).